A 548-amino-acid chain; its full sequence is MAAKDVKFGNDARIKMLRGVNILADAVKVTLGPKGRNVVLDKSFGSPTITKDGVSVAREIELEDKFENMGAQMVKEVASKANDAAGDGTTTATVLAQSIITEGLKAVAAGMNPMDLKRGIDKAVIAAVEELKKLSVPCSDSKAIAQVGTISANSDSTVGELIAQAMEKVGKEGVITVEEGSGLQDELDVVEGMQFDRGYLSPYFINKPETGSIELESPFILLADKKISNIREMLPVLEAVAKAGKPLLIIAEDVEGEALATLVVNTMRGIVKVAAVKAPGFGDRRKAMLQDIATLTAGTVISEEIGLELEKTTLEDLGQAKRVVINKDTTIIIDGVGDEAAIQGRVAQIRQQIEDATSDYDKEKLQERVAKLAGGVAVIKVGAATEVEMKEKKARVEDALHATRAAVEEGVVAGGGVALIRAAHAIAGLKGDNEDQNVGIKVALRAMESPLRQIVVNAGEEASVIANKVKAGEGSFGYNAYTEEYGDMIAMGILDPTKVTRSALQYAASIAGLMITTECMVTDLPRDDKGADMGAGGMGGMGGMGGMM.

Residues 30 to 33 (TLGP), Lys51, 87 to 91 (DGTTT), Gly415, and Asp495 each bind ATP.

Belongs to the chaperonin (HSP60) family. In terms of assembly, forms a cylinder of 14 subunits composed of two heptameric rings stacked back-to-back. Interacts with the co-chaperonin GroES.

It localises to the cytoplasm. It catalyses the reaction ATP + H2O + a folded polypeptide = ADP + phosphate + an unfolded polypeptide.. Functionally, together with its co-chaperonin GroES, plays an essential role in assisting protein folding. The GroEL-GroES system forms a nano-cage that allows encapsulation of the non-native substrate proteins and provides a physical environment optimized to promote and accelerate protein folding. The chain is Chaperonin GroEL from Yersinia pseudotuberculosis serotype O:1b (strain IP 31758).